The following is a 435-amino-acid chain: Transmembrane protease serine 4 (435 aa).

At 1 to 30 (MESDSGQPLNNRDIVPFRKPRRPQETFKKV) the chain is on the cytoplasmic side. Residues 31–51 (GIPIIAVLLSLIALVIVALLI) form a helical; Signal-anchor for type II membrane protein membrane-spanning segment. At 52 to 435 (KVILDKYYFI…WIYNVRKSEM (384 aa)) the chain is on the extracellular side. One can recognise an LDL-receptor class A domain in the interval 59-101 (YFICGSPLTFIQRGQLCDGHLDCASGEDEEHCVKDFPEKPGVA). 8 disulfide bridges follow: Cys-62–Cys-81, Cys-75–Cys-90, Cys-125–Cys-181, Cys-138–Cys-191, Cys-194–Cys-308, Cys-228–Cys-244, Cys-354–Cys-370, and Cys-381–Cys-408. The region spanning 102–202 (VRLSKDRSTL…DCGKSLKTPR (101 aa)) is the SRCR domain. N-linked (GlcNAc...) asparagine glycans are attached at residues Asn-128 and Asn-176. The Peptidase S1 domain occupies 203 to 432 (VVGGVEAPVD…YLNWIYNVRK (230 aa)). Residues His-243 and Asp-288 each act as charge relay system in the active site. Catalysis depends on Ser-385, which acts as the Charge relay system.

It belongs to the peptidase S1 family. In terms of processing, proteolytically processed; probably by an autocatalytic mechanism.

It is found in the cell membrane. The protein localises to the secreted. Functionally, plasma membrane-anchored serine protease that directly induces processing of pro-uPA/PLAU into the active form through proteolytic activity. Seems to be capable of activating ENaC. This chain is Transmembrane protease serine 4, found in Mus musculus (Mouse).